Reading from the N-terminus, the 1111-residue chain is Zinc finger protein GLI1 (1111 aa).

Residues 52-78 are disordered; it reads GYGAARETSSCTEGSLFPPPPPPRSSV. Residues 123-127 are interaction with SUFU; the sequence is SYGHL. 5 C2H2-type zinc fingers span residues 238-263, 271-298, 304-328, 334-359, and 365-390; these read TDCR…NSEH, FVCH…MRRH, HKCT…LRSH, YMCE…NRTH, and YVCK…KTVH. Residues 286-294 are interaction with DNA; sequence KAQYMLVVH. Interaction with DNA stretches follow at residues 348–353 and 378–384; these read ASDRAK and DPSSLRK. The disordered stretch occupies residues 378 to 487; it reads DPSSLRKHVK…EDLSSLDEGP (110 aa). Over residues 416-431 the composition is skewed to basic and acidic residues; sequence EPKREREGGSGREESR. Over residues 439 to 465 the composition is skewed to polar residues; the sequence is MPQQSPGAQSSCSSDHSPAGSAANTDS. The residue at position 520 (Lys520) is an N6-acetyllysine. Disordered regions lie at residues 528 to 583, 598 to 649, 673 to 692, and 832 to 891; these read GAPV…LPGL, ARGS…RAAD, TGRN…QPPS, and PCLN…SSHS. A compositionally biased stretch (low complexity) spans 546 to 562; sequence SSSSSMSSAYTVSRRSS. The span at 640 to 649 shows a compositional bias: basic and acidic residues; it reads RASDPARAAD. Residues 855–870 show a composition bias toward pro residues; it reads LPQPQYPQSGPYPQPP. Lys1008 is covalently cross-linked (Glycyl lysine isopeptide (Lys-Gly) (interchain with G-Cter in SUMO2)). The disordered stretch occupies residues 1064–1093; that stretch reads LSPPLSHEQGDSSKNTPSPSGPPNMAVGNM.

It belongs to the GLI C2H2-type zinc-finger protein family. As to quaternary structure, interacts with KIF7. Interacts with STK36. Interacts with ZIC1; the interaction enhances transcription activation. Interacts with SUFU; this inhibits transcriptional activation by GLI1. Phosphorylated in vitro by ULK3. In terms of processing, acetylation at Lys-520 down-regulates transcriptional activity. Deacetylated by HDAC1. Post-translationally, ubiquitinated by the CRL2(FEM1B) complex, suppressing GLI1 transcriptional activator activity.

The protein resides in the cytoplasm. It is found in the nucleus. Functionally, acts as a transcriptional activator. Binds to the DNA consensus sequence 5'-GACCACCCA-3'. Regulates the transcription of specific genes during normal development. Plays a role in craniofacial development and digital development, as well as development of the central nervous system and gastrointestinal tract. Mediates SHH signaling. Plays a role in cell proliferation and differentiation via its role in SHH signaling. This chain is Zinc finger protein GLI1 (Gli1), found in Mus musculus (Mouse).